A 631-amino-acid chain; its full sequence is tRNA uridine 5-carboxymethylaminomethyl modification enzyme MnmG (631 aa).

FAD contacts are provided by residues 13–18 (GGGHAG), Val-125, and Ser-180. 273-287 (GPRYCPSIEDKVMRF) is a binding site for NAD(+). Gln-370 contributes to the FAD binding site.

It belongs to the MnmG family. As to quaternary structure, homodimer. Heterotetramer of two MnmE and two MnmG subunits. Requires FAD as cofactor.

The protein localises to the cytoplasm. Functionally, NAD-binding protein involved in the addition of a carboxymethylaminomethyl (cmnm) group at the wobble position (U34) of certain tRNAs, forming tRNA-cmnm(5)s(2)U34. This chain is tRNA uridine 5-carboxymethylaminomethyl modification enzyme MnmG, found in Vibrio campbellii (strain ATCC BAA-1116).